A 361-amino-acid chain; its full sequence is MASANSSAGIRWSRQETRTLLSILGEAEYIQRLQTVHHNADVYQAVSKRMQQEGFRRTERQCRSKFKVLKALYLKAYVAHATSMGEPPHCPFYDTLDQLLRNQIVTDPDNLMEDAAWAKHCDQNLVASDAPGEEGTGILKSKRTQAADHQPILKTVKASDEDCQLRISDRIRETSDLEDSWDESSGAGCSQGTPSYSSSHSLFRGAVAPCQSSPMARLGVSGEPSPCTSTNRSTPGVASTPQTPVSSSRAGFVSGGDRPLTSEPPPRWARRRRRSVARTIAAELAENRRLARELSKREEEKLDRLIAIGEEASAQQDTANELRRDAVIAVRRLATAVEEATGAFQLGLEKLLQRLISNTKS.

The region spanning 11–70 (RWSRQETRTLLSILGEAEYIQRLQTVHHNADVYQAVSKRMQQEGFRRTERQCRSKFKVLK) is the Myb-like domain. Disordered regions lie at residues 174–198 (TSDLEDSWDESSGAGCSQGTPSYSS) and 217–272 (RLGV…ARRR). 2 stretches are compositionally biased toward polar residues: residues 187-198 (AGCSQGTPSYSS) and 226-249 (PCTSTNRSTPGVASTPQTPVSSSR).

The protein is Myb/SANT-like DNA-binding domain-containing protein 7 of Homo sapiens (Human).